The following is a 124-amino-acid chain: Ubiquinol-cytochrome-c reductase complex assembly factor 2 (124 aa).

Residues 1 to 13 (MASLRYRRFLKLC) constitute a mitochondrion transit peptide.

The protein localises to the mitochondrion matrix. It localises to the mitochondrion nucleoid. It is found in the mitochondrion. Its function is as follows. Required for the assembly of the ubiquinol-cytochrome c reductase complex (mitochondrial respiratory chain complex III or cytochrome b-c1 complex). May play a role in the modulation of respiratory chain activities such as oxygen consumption and ATP production. May be involved in cytochrome b translation and/or stability. The chain is Ubiquinol-cytochrome-c reductase complex assembly factor 2 (uqcc2) from Xenopus tropicalis (Western clawed frog).